A 157-amino-acid polypeptide reads, in one-letter code: Probable succinate transporter subunit YjjB (157 aa).

4 helical membrane passes run 8–28, 50–70, 87–107, and 129–149; these read LALAQDMILAAIPAVGFAMVF, MILMTSGLNIEWSTFMASMLV, VFTVAAVIPMFPGISAYTAMI, and FLTASSIVGALSIGLSIPGLW.

The protein belongs to the ThrE exporter (TC 2.A.79) family. The transporter is composed of YjjB and YjjP.

The protein localises to the cell inner membrane. In terms of biological role, involved in succinate export with YjjP. Both proteins are required for export. This is Probable succinate transporter subunit YjjB from Escherichia coli O1:K1 / APEC.